Consider the following 278-residue polypeptide: TATA box-binding protein-associated factor RNA polymerase I subunit D (278 aa).

Disordered regions lie at residues 20-71 (ANRS…SSFE) and 88-116 (KKRY…RNPI). Positions 22-33 (RSDNSSDSSLFK) are enriched in polar residues. The residue at position 23 (Ser-23) is a Phosphoserine. Over residues 88 to 99 (KKRYKKKKKRRY) the composition is skewed to basic residues. Phosphoserine is present on residues Ser-138 and Ser-234.

As to quaternary structure, component of the transcription factor SL1/TIF-IB complex, composed of TBP and at least TAF1A, TAF1B, TAF1C and TAF1D. Interacts with UBTF.

Its subcellular location is the nucleus. Component of the transcription factor SL1/TIF-IB complex, which is involved in the assembly of the PIC (preinitiation complex) during RNA polymerase I-dependent transcription. The rate of PIC formation probably is primarily dependent on the rate of association of SL1/TIF-IB with the rDNA promoter. SL1/TIF-IB is involved in stabilization of nucleolar transcription factor 1/UBTF on rDNA. Formation of SL1/TIF-IB excludes the association of TBP with TFIID subunits. In Homo sapiens (Human), this protein is TATA box-binding protein-associated factor RNA polymerase I subunit D (TAF1D).